A 502-amino-acid chain; its full sequence is Probable cytosol aminopeptidase (502 aa).

Mn(2+) contacts are provided by Lys267 and Asp272. Residue Lys279 is part of the active site. 3 residues coordinate Mn(2+): Asp290, Asp349, and Glu351. The active site involves Arg353.

It belongs to the peptidase M17 family. The cofactor is Mn(2+).

The protein localises to the cytoplasm. The enzyme catalyses Release of an N-terminal amino acid, Xaa-|-Yaa-, in which Xaa is preferably Leu, but may be other amino acids including Pro although not Arg or Lys, and Yaa may be Pro. Amino acid amides and methyl esters are also readily hydrolyzed, but rates on arylamides are exceedingly low.. It catalyses the reaction Release of an N-terminal amino acid, preferentially leucine, but not glutamic or aspartic acids.. Functionally, presumably involved in the processing and regular turnover of intracellular proteins. Catalyzes the removal of unsubstituted N-terminal amino acids from various peptides. The protein is Probable cytosol aminopeptidase of Aeromonas hydrophila subsp. hydrophila (strain ATCC 7966 / DSM 30187 / BCRC 13018 / CCUG 14551 / JCM 1027 / KCTC 2358 / NCIMB 9240 / NCTC 8049).